A 147-amino-acid polypeptide reads, in one-letter code: 3-dehydroquinate dehydratase (147 aa).

Y23 acts as the Proton acceptor in catalysis. Residues N74, H80, and D87 each coordinate substrate. The active-site Proton donor is the H100. Substrate-binding positions include 101-102 (LS) and R111.

The protein belongs to the type-II 3-dehydroquinase family. Homododecamer.

It carries out the reaction 3-dehydroquinate = 3-dehydroshikimate + H2O. It functions in the pathway metabolic intermediate biosynthesis; chorismate biosynthesis; chorismate from D-erythrose 4-phosphate and phosphoenolpyruvate: step 3/7. Catalyzes a trans-dehydration via an enolate intermediate. The sequence is that of 3-dehydroquinate dehydratase from Clostridium botulinum (strain 657 / Type Ba4).